The sequence spans 68 residues: Large ribosomal subunit protein uL30 (68 aa).

This sequence belongs to the universal ribosomal protein uL30 family. In terms of assembly, part of the 50S ribosomal subunit.

This Kocuria rhizophila (strain ATCC 9341 / DSM 348 / NBRC 103217 / DC2201) protein is Large ribosomal subunit protein uL30.